Consider the following 327-residue polypeptide: 3' cyclic ADP-D-ribose synthase AaTIR (327 aa).

The tract at residues 10-120 is TIR domain; the sequence is VALSFAGENR…GILKTIGYIN (111 aa). Lys-229 is a catalytic residue.

As to quaternary structure, homodimer.

It carries out the reaction NADP(+) + H2O = ADP-D-ribose 2'-phosphate + nicotinamide + H(+). The enzyme catalyses NAD(+) = 3'cADPR + nicotinamide + H(+). Its function is as follows. NAD(+) hydrolase (NADase) that generates 3'cADPR, a cyclization variant of cyclic ADP-D-ribose (also called v2-cADPR). Also cleaves NADP(+), but does not cyclize the product. This Aquimarina amphilecti protein is 3' cyclic ADP-D-ribose synthase AaTIR.